Consider the following 248-residue polypeptide: Segregation and condensation protein A (248 aa).

The protein belongs to the ScpA family. Component of a cohesin-like complex composed of ScpA, ScpB and the Smc homodimer, in which ScpA and ScpB bind to the head domain of Smc. The presence of the three proteins is required for the association of the complex with DNA.

The protein localises to the cytoplasm. Participates in chromosomal partition during cell division. May act via the formation of a condensin-like complex containing Smc and ScpB that pull DNA away from mid-cell into both cell halves. The protein is Segregation and condensation protein A of Clostridium perfringens (strain SM101 / Type A).